The sequence spans 502 residues: Probable cytochrome P450 313b1 (502 aa).

Residue C449 coordinates heme.

The protein belongs to the cytochrome P450 family. Heme is required as a cofactor.

The protein localises to the endoplasmic reticulum membrane. The protein resides in the microsome membrane. Its function is as follows. May be involved in the metabolism of insect hormones and in the breakdown of synthetic insecticides. This chain is Probable cytochrome P450 313b1 (Cyp313b1), found in Drosophila melanogaster (Fruit fly).